Reading from the N-terminus, the 375-residue chain is Fluoride export protein 1 (375 aa).

Topologically, residues 1–11 (MIFNPVISNHK) are cytoplasmic. A helical membrane pass occupies residues 12–32 (LSHYIHVFCTFTTFCILGTET). Over 33–34 (RQ) the chain is Extracellular. A helical membrane pass occupies residues 35–55 (AITALSTYTPAFVTAPTVLWS). Over 56–79 (NCSSCMLMGIMQSLNAYTWMKDHQ) the chain is Cytoplasmic. The helical transmembrane segment at 80–100 (VLFLGVTTGYCGALSSFSSML) threads the bilayer. The Extracellular portion of the chain corresponds to 101–127 (LEMFEHSTNLTNGNIANHTKLPNRAYG). N-linked (GlcNAc...) asparagine glycans are attached at residues Asn-109 and Asn-117. A helical transmembrane segment spans residues 128–148 (IMEFLSVLLVHLMVSMGSLIF). The Cytoplasmic segment spans residues 149–213 (GRQLGKEVIV…FKKFFDIVDK (65 aa)). A helical transmembrane segment spans residues 214-234 (LAYALAFPLIILFVVLCAYYE). The N-linked (GlcNAc...) asparagine glycan is linked to Asn-235. At 235 to 241 (NYSRGKW) the chain is on the extracellular side. A helical membrane pass occupies residues 242-262 (TLPCLFGIFAGFLRYWLAEMF). Topologically, residues 263–268 (NKTNKK) are cytoplasmic. A helical membrane pass occupies residues 269–289 (FPLGTFLANVFATLLIGIFTM). Over 290–310 (VQRGKKHFSTDVPIVNSLNSC) the chain is Extracellular. Residues 311-331 (HIVSALISGFCGTLSTISTFI) traverse the membrane as a helical segment. At 332–338 (NEGYKLS) the chain is on the cytoplasmic side. The chain crosses the membrane as a helical span at residues 339–359 (FINMLIYYTVSIAISYCLLVI). At 360–375 (TLGSYAWTRGLTNPIC) the chain is on the extracellular side.

The protein belongs to the fluoride channel Fluc/FEX (TC 1.A.43) family.

Its subcellular location is the cell membrane. It carries out the reaction fluoride(in) = fluoride(out). Functionally, fluoride channel required for the rapid expulsion of cytoplasmic fluoride. The sequence is that of Fluoride export protein 1 from Saccharomyces cerevisiae (strain ATCC 204508 / S288c) (Baker's yeast).